A 458-amino-acid chain; its full sequence is Ammonium transporter Rh type B (458 aa).

The Cytoplasmic segment spans residues 1–11; the sequence is MTDAATNMRLK. The helical transmembrane segment at 12 to 32 threads the bilayer; it reads LPITCFILEIILIILFGTLVQ. At 33 to 58 the chain is on the extracellular side; the sequence is YDYETDAKEWHNTSHQDYENDFYFRY. An N-linked (GlcNAc...) asparagine glycan is attached at N44. Residues 59-79 form a helical membrane-spanning segment; it reads PSFQDVHVMIFVGFGFLMTFL. The Cytoplasmic portion of the chain corresponds to 80-83; the sequence is QRYG. Residues 84 to 104 form a helical membrane-spanning segment; it reads FGSVGFNFLIAAFSLQWATLM. Topologically, residues 105 to 121 are extracellular; that stretch reads QGFFHGMHGGKIHIGVE. A helical membrane pass occupies residues 122–142; sequence SMINADFCTGSVLISFGAVLG. Topologically, residues 143–151 are cytoplasmic; sequence KTSPIQLLT. Residues 152-172 traverse the membrane as a helical segment; sequence MAIFEVTLFAVNEFILLSLLG. Residues 173 to 176 are Extracellular-facing; the sequence is TKDA. Residues 177-197 form a helical membrane-spanning segment; that stretch reads GGSMTIHTFGAYFGLMVTRIL. Topologically, residues 198 to 216 are cytoplasmic; sequence YRPNLDKSKHRNSSVYHSD. The helical transmembrane segment at 217–237 threads the bilayer; sequence LFAMIGTVYLWMFWPSFNSAI. Residues 238–247 are Extracellular-facing; it reads TAHGDDQHRT. Residues 248-270 form a helical membrane-spanning segment; that stretch reads ALNTYYSLAACTLATYGMSAITS. Topologically, residues 271–274 are cytoplasmic; the sequence is HDGK. A helical membrane pass occupies residues 275 to 295; the sequence is LDMVHIQNAALAGGVAVGTAG. The Extracellular segment spans residues 296-298; sequence EMM. Residues 299–319 traverse the membrane as a helical segment; sequence LTPFGSMIVGFMAGIISVLGF. Topologically, residues 320 to 340 are cytoplasmic; it reads KFLSPILEDKLKIQDTCGIHN. The chain crosses the membrane as a helical span at residues 341–361; that stretch reads LHGMPGVLGAIVGAVTAALAT. The Extracellular portion of the chain corresponds to 362–391; the sequence is TDVYGQGMADVFPAVADGSVNATKQGGIQA. A helical membrane pass occupies residues 392–412; it reads LSLAITLGIAVLGGLIVGFVL. Over 413–458 the chain is Cytoplasmic; that stretch reads KLPVFGTPPDTLCFEDSVYWEVPGSESPEEGELTSVKPEETEHLNS. Positions 436–458 are disordered; the sequence is GSESPEEGELTSVKPEETEHLNS. Residues 449 to 458 are compositionally biased toward basic and acidic residues; sequence KPEETEHLNS.

It belongs to the ammonium transporter (TC 2.A.49) family. Rh subfamily. Specifically expressed in the gill by pavement cells (at protein level).

The protein resides in the apicolateral cell membrane. The protein localises to the cytoplasmic vesicle membrane. Functionally, functions as an ammonia transporter. May play a role in the elimination of ammonia in the gill. The sequence is that of Ammonium transporter Rh type B (rhbg) from Takifugu rubripes (Japanese pufferfish).